The chain runs to 367 residues: DNA replication and repair protein RecF (367 aa).

ATP is bound at residue 30-37 (GENAQGKT).

This sequence belongs to the RecF family.

It is found in the cytoplasm. Its function is as follows. The RecF protein is involved in DNA metabolism; it is required for DNA replication and normal SOS inducibility. RecF binds preferentially to single-stranded, linear DNA. It also seems to bind ATP. The protein is DNA replication and repair protein RecF of Chlamydia abortus (strain DSM 27085 / S26/3) (Chlamydophila abortus).